The chain runs to 83 residues: Small ribosomal subunit protein uS17 (83 aa).

Belongs to the universal ribosomal protein uS17 family. In terms of assembly, part of the 30S ribosomal subunit.

Functionally, one of the primary rRNA binding proteins, it binds specifically to the 5'-end of 16S ribosomal RNA. This Aliarcobacter butzleri (strain RM4018) (Arcobacter butzleri) protein is Small ribosomal subunit protein uS17.